Consider the following 1463-residue polypeptide: Secretory phospholipase A2 receptor (1463 aa).

An N-terminal signal peptide occupies residues 1 to 20 (MLLSPSLLLLLLLGAPRGCA). Topologically, residues 21 to 1397 (EGVAAALTPE…ALPEKGPSHS (1377 aa)) are extracellular. The Ricin B-type lectin domain occupies 38–161 (KGIFVIQSES…GSGGGDICEY (124 aa)). Cystine bridges form between Cys-51/Cys-64, Cys-89/Cys-106, Cys-178/Cys-204, Cys-192/Cys-219, Cys-260/Cys-354, Cys-330/Cys-346, Cys-406/Cys-501, Cys-478/Cys-493, Cys-617/Cys-634, Cys-699/Cys-796, Cys-774/Cys-788, Cys-840/Cys-937, Cys-914/Cys-929, and Cys-1067/Cys-1087. Residue Asn-93 is glycosylated (N-linked (GlcNAc...) asparagine). A Fibronectin type-II domain is found at 173–221 (THGMPCMFPFQYNHQWHHECTREGREDDLLWCATTSRYERDEKWGFCPD). C-type lectin domains lie at 238–355 (NSHI…YICK), 385–502 (YNRN…YICK), 522–643 (HGGF…MSLC), 673–797 (GLAS…WICK), 819–938 (YQDA…SICK), 965–1096 (FNYK…GFVC), 1121–1232 (YGNR…GAIC), and 1257–1378 (FKSN…FICK). Asn-454 is a glycosylation site (N-linked (GlcNAc...) asparagine). Residue Asn-1123 is glycosylated (N-linked (GlcNAc...) asparagine). Cystine bridges form between Cys-1209-Cys-1223, Cys-1280-Cys-1377, and Cys-1354-Cys-1369. The chain crosses the membrane as a helical span at residues 1398 to 1418 (IIPLAVVLTLIVIVAICTLSF). At 1419–1463 (CIYKHNGGFFRRLAGFRNPYYPATNFSTVYLEENILISDLEKSDQ) the chain is on the cytoplasmic side. The Endocytosis signal signature appears at 1436-1442 (NPYYPAT).

As to quaternary structure, interacts with sPLA2-IB/PLA2G1B; this interaction mediates intracellular signaling as well as clearance of extracellular sPLA2-IB/PLA2G1B via endocytotic pathway. Interacts with sPLA2-X/PLA2G10; this interaction mediates sPLA2-X/PLA2G10 clearance and inactivation. The secretory phospholipase A2 receptor form may be produced by the action of metalloproteinases. It contains all extracellular domains and only lacks transmembrane and cytosolic regions. It is however unclear whether this form is produced by proteolytic cleavage as suggested by some experiments, or by alternative splicing, as in the case of isoform 2 that shares all characteristics of secretory phospholipase A2 receptor form. As to expression, expressed in podocytes (at protein level). Present in lung macrophage (at protein level). Highly expressed in kidney. Also expressed in pancreas, amnion, choriodecidua and placenta. Isoform 2 is expressed at much lower level.

The protein resides in the cell membrane. Its subcellular location is the secreted. Receptor for secretory phospholipase A2 (sPLA2). Acts as a receptor for phospholipase sPLA2-IB/PLA2G1B but not sPLA2-IIA/PLA2G2A. Also able to bind to snake PA2-like toxins. Although its precise function remains unclear, binding of sPLA2 to its receptor participates in both positive and negative regulation of sPLA2 functions as well as clearance of sPLA2. Binding of sPLA2-IB/PLA2G1B induces various effects depending on the cell type, such as activation of the mitogen-activated protein kinase (MAPK) cascade to induce cell proliferation, the production of lipid mediators, selective release of arachidonic acid in bone marrow-derived mast cells. In neutrophils, binding of sPLA2-IB/PLA2G1B can activate p38 MAPK to stimulate elastase release and cell adhesion. May be involved in responses in pro-inflammatory cytokine productions during endotoxic shock. Also has endocytic properties and rapidly internalizes sPLA2 ligands, which is particularly important for the clearance of extracellular sPLA2s to protect their potent enzymatic activities. The soluble secretory phospholipase A2 receptor form is circulating and acts as a negative regulator of sPLA2 functions by blocking the biological functions of sPLA2-IB/PLA2G1B. In podocytes, binding of sPLA2-IB/PLA2G1B can regulate podocyte survival and glomerular homeostasis. The chain is Secretory phospholipase A2 receptor (PLA2R1) from Homo sapiens (Human).